Reading from the N-terminus, the 548-residue chain is Probable sucrose-6-phosphate hydrolase (548 aa).

Substrate contacts are provided by residues 105–108 (LLND), glutamine 124, 167–168 (FS), 228–229 (RD), and glutamate 283. Residue aspartate 108 is part of the active site.

The protein belongs to the glycosyl hydrolase 32 family.

It is found in the cytoplasm. The enzyme catalyses Hydrolysis of terminal non-reducing beta-D-fructofuranoside residues in beta-D-fructofuranosides.. Its pathway is glycan biosynthesis; sucrose metabolism. Its function is as follows. Enables the bacterium to metabolize sucrose as a sole carbon source. The sequence is that of Probable sucrose-6-phosphate hydrolase from Vibrio cholerae serotype O1 (strain ATCC 39315 / El Tor Inaba N16961).